A 121-amino-acid polypeptide reads, in one-letter code: Small ribosomal subunit protein uS13 (121 aa).

A disordered region spans residues 93–121 (RGLPMRGQRTRTNARTRKGPRKSAAALKK).

This sequence belongs to the universal ribosomal protein uS13 family. Part of the 30S ribosomal subunit. Forms a loose heterodimer with protein S19. Forms two bridges to the 50S subunit in the 70S ribosome.

Located at the top of the head of the 30S subunit, it contacts several helices of the 16S rRNA. In the 70S ribosome it contacts the 23S rRNA (bridge B1a) and protein L5 of the 50S subunit (bridge B1b), connecting the 2 subunits; these bridges are implicated in subunit movement. Contacts the tRNAs in the A and P-sites. This is Small ribosomal subunit protein uS13 from Methylibium petroleiphilum (strain ATCC BAA-1232 / LMG 22953 / PM1).